A 246-amino-acid chain; its full sequence is Adenosylcobinamide-GDP ribazoletransferase (246 aa).

6 consecutive transmembrane segments (helical) span residues 37–57 (FPAVGLVIGAAVAGAAWAGAL), 64–84 (ALAALIVWVGVTGALHLDGLA), 100–122 (LLAVLADPHVGSFGVVAIVLQLL), 139–159 (ALVLVPFAARIGPLVWTWWLM), 185–205 (LAAAAWFTPALLVTPLLVLWW), and 223–243 (AGIELIETGLLLSVAITGLWI).

The protein belongs to the CobS family. Mg(2+) serves as cofactor.

It is found in the cell inner membrane. It carries out the reaction alpha-ribazole + adenosylcob(III)inamide-GDP = adenosylcob(III)alamin + GMP + H(+). The catalysed reaction is alpha-ribazole 5'-phosphate + adenosylcob(III)inamide-GDP = adenosylcob(III)alamin 5'-phosphate + GMP + H(+). It functions in the pathway cofactor biosynthesis; adenosylcobalamin biosynthesis; adenosylcobalamin from cob(II)yrinate a,c-diamide: step 7/7. Its function is as follows. Joins adenosylcobinamide-GDP and alpha-ribazole to generate adenosylcobalamin (Ado-cobalamin). Also synthesizes adenosylcobalamin 5'-phosphate from adenosylcobinamide-GDP and alpha-ribazole 5'-phosphate. This chain is Adenosylcobinamide-GDP ribazoletransferase, found in Novosphingobium aromaticivorans (strain ATCC 700278 / DSM 12444 / CCUG 56034 / CIP 105152 / NBRC 16084 / F199).